Consider the following 888-residue polypeptide: Protein translocase subunit SecA (888 aa).

Residues glutamine 81, 99–103 (GEGKT), and aspartate 489 contribute to the ATP site.

This sequence belongs to the SecA family.

It localises to the plastid. The protein localises to the chloroplast stroma. The protein resides in the chloroplast thylakoid membrane. The enzyme catalyses ATP + H2O + cellular proteinSide 1 = ADP + phosphate + cellular proteinSide 2.. Its function is as follows. Has a central role in coupling the hydrolysis of ATP to the transfer of proteins across the thylakoid membrane. The protein is Protein translocase subunit SecA of Trieres chinensis (Marine centric diatom).